Here is a 527-residue protein sequence, read N- to C-terminus: Serine/threonine-protein kinase NLK (527 aa).

Sufficient for interaction with DAPK3 regions lie at residues 1-125 (MSLC…KAHH) and 124-416 (HHHQ…SKRI). 2 required for interaction with TAB2 regions span residues 1–304 (MSLC…VVTQ) and 434–527 (YHTC…LVWE). 2 disordered regions span residues 22–72 (AAAA…SSAA) and 90–140 (QQPY…DIEP). Basic residues predominate over residues 26–54 (GHHHHHHHHLPHLPPPHLHHHHHPQHHLH). Residues 103-119 (PGPAAAAPAQVQAAAAA) are compositionally biased toward low complexity. Basic residues predominate over residues 122 to 131 (KAHHHQHSHH). Positions 138–427 (IEPDRPIGYG…AKDALAHPYL (290 aa)) constitute a Protein kinase domain. ATP-binding positions include 144-152 (IGYGAFGVV) and Lys167. The active-site Proton acceptor is Asp264. Thr298 carries the post-translational modification Phosphothreonine; by autocatalysis. Residues 298–300 (TQE) carry the TQE motif. The required for homodimerization and kinase activation and localization to the nucleus stretch occupies residues 428–527 (DEGRLRYHTC…EMPPSPLVWE (100 aa)). Ser522 bears the Phosphoserine mark.

The protein belongs to the protein kinase superfamily. CMGC Ser/Thr protein kinase family. MAP kinase subfamily. Homodimer. Homodimerization is required for intermolecular autophosphorylation, kinase activation and nuclear localization. May interact with components of cullin-RING-based SCF (SKP1-CUL1-F-box protein) E3 ubiquitin-protein ligase complexes. Interacts with LEF1, MEF2A, MYBL1 and MYBL2. Interacts with the upstream activating kinases HIPK2 and MAP3K7/TAK1. Interaction with MAP3K7/TAK1 seems to be indirect, and may be mediated by other proteins such as STAT3, TAB1 and TAB2. Interacts with and phosphorylates a number of transcription factors including FOXO1, FOXO3, FOXO4, MYB, NOTCH1 and TCF7L2/TCF4. Interacts with DAPK3/ZIPK, and this interaction may disrupt interaction with transcription factors such as TCF7L2/TCF4. Forms a transcriptional repressor complex with CHD7, PPARG and SETDB1. Interacts with RNF138/NARF. Interacts with ATF5; the interaction stabilizes ATF5 at the protein level in a kinase-independent manner. The cofactor is Mg(2+). Post-translationally, phosphorylated on Thr-298. Intermolecular autophosphorylation on Thr-298 activates the enzyme.

The protein localises to the nucleus. Its subcellular location is the cytoplasm. The catalysed reaction is L-seryl-[protein] + ATP = O-phospho-L-seryl-[protein] + ADP + H(+). It carries out the reaction L-threonyl-[protein] + ATP = O-phospho-L-threonyl-[protein] + ADP + H(+). Activated by the non-canonical Wnt signaling pathway, in which WNT5A leads to activation of MAP3K7/TAK1 and HIPK2, which subsequently phosphorylates and activates this protein. Activated by dimerization and subsequent intermolecular autophosphorylation on Thr-298. Other cytokines such as IL6 may also activate this regulatory circuit. In terms of biological role, serine/threonine-protein kinase that regulates a number of transcription factors with key roles in cell fate determination. Positive effector of the non-canonical Wnt signaling pathway, acting downstream of WNT5A, MAP3K7/TAK1 and HIPK2. Negative regulator of the canonical Wnt/beta-catenin signaling pathway. Binds to and phosphorylates TCF7L2/TCF4 and LEF1, promoting the dissociation of the TCF7L2/LEF1/beta-catenin complex from DNA, as well as the ubiquitination and subsequent proteolysis of LEF1. Together these effects inhibit the transcriptional activation of canonical Wnt/beta-catenin target genes. Negative regulator of the Notch signaling pathway. Binds to and phosphorylates NOTCH1, thereby preventing the formation of a transcriptionally active ternary complex of NOTCH1, RBPJ/RBPSUH and MAML1. Negative regulator of the MYB family of transcription factors. Phosphorylation of MYB leads to its subsequent proteolysis while phosphorylation of MYBL1 and MYBL2 inhibits their interaction with the coactivator CREBBP. Other transcription factors may also be inhibited by direct phosphorylation of CREBBP itself. Acts downstream of IL6 and MAP3K7/TAK1 to phosphorylate STAT3, which is in turn required for activation of NLK by MAP3K7/TAK1. Upon IL1B stimulus, cooperates with ATF5 to activate the transactivation activity of C/EBP subfamily members. Phosphorylates ATF5 but also stabilizes ATF5 protein levels in a kinase-independent manner. Acts as an inhibitor of the mTORC1 complex in response to osmotic stress by mediating phosphorylation of RPTOR, thereby preventing recruitment of the mTORC1 complex to lysosomes. This Canis lupus familiaris (Dog) protein is Serine/threonine-protein kinase NLK (NLK).